Consider the following 547-residue polypeptide: MHRRRRDNLMTPAEMVASMKPPQSLSTEDDDGSRRDSESSADVLKSNEEFQARMIPEDDDANSVTAQPTWTVLSDTEIKSVLVVASFAAAISPFSTSTYYPAVFAISQDLGVSVSKINLTMSSYQIFQGVAPTITAAFADTYGRRPMFLVCFAIYFVANVGLALQNNFTTLLVLRCLQSTGSSGTFALAQAVTADITTRAERGRYLIYATLGSTLGPFLGPVIGGLLVKFLGWRSVFWFLLCMGTVFALLIFIFFGETARPIVGDGSVPPQSWNRSFLQIRSKGITSLKPNLASLERRKSRPNPLTSLALLWDRENFILSVSGGLLYAGYSSVTSVLASQLQQRYKYDAVQVGLCYLPVGFGSLLAYRTTVRLMDWNFEREAKKQGLVIVKNQQTDITRFDLEKARLGFVFPMILVCSVLLVAYGWQMHYHAPLAPILVTMFLIAIILTGVMNAIAALLTDVNRENAAAVGAAMNLTRLLLGAGAVAVVGPLNKSAGIGWTATVTAGLWVLMMPTLRMVYRDGFVWRAGENERVHASNVELAALVRS.

The segment at 1–45 is disordered; it reads MHRRRRDNLMTPAEMVASMKPPQSLSTEDDDGSRRDSESSADVLK. A helical membrane pass occupies residues 81 to 101; that stretch reads VLVVASFAAAISPFSTSTYYP. Asn118 carries an N-linked (GlcNAc...) asparagine glycan. Residues 146–166 form a helical membrane-spanning segment; it reads PMFLVCFAIYFVANVGLALQN. Asn167 carries N-linked (GlcNAc...) asparagine glycosylation. The next 2 membrane-spanning stretches (helical) occupy residues 206–226 and 236–256; these read LIYATLGSTLGPFLGPVIGGL and VFWFLLCMGTVFALLIFIFFG. N-linked (GlcNAc...) asparagine glycosylation occurs at Asn274. The next 5 membrane-spanning stretches (helical) occupy residues 317–337, 347–367, 407–427, 432–452, and 469–489; these read FILSVSGGLLYAGYSSVTSVL, YDAVQVGLCYLPVGFGSLLAY, LGFVFPMILVCSVLLVAYGWQ, APLAPILVTMFLIAIILTGVM, and AVGAAMNLTRLLLGAGAVAVV. Asn493 carries an N-linked (GlcNAc...) asparagine glycan. A helical transmembrane segment spans residues 496–516; it reads AGIGWTATVTAGLWVLMMPTL.

This sequence belongs to the major facilitator superfamily. CAR1 family.

It is found in the membrane. MFS-type transporter; part of the gene cluster that mediates the biosynthesis of squalestatin S1 (SQS1, also known as zaragozic acid A), a heavily oxidized fungal polyketide that offers potent cholesterol lowering activity by targeting squalene synthase (SS). This Phoma sp. (strain ATCC 20986 / MF5453) protein is MFS-type transporter M6.